A 135-amino-acid chain; its full sequence is Ribosome-binding factor A (135 aa).

This sequence belongs to the RbfA family. Monomer. Binds 30S ribosomal subunits, but not 50S ribosomal subunits or 70S ribosomes.

The protein resides in the cytoplasm. In terms of biological role, one of several proteins that assist in the late maturation steps of the functional core of the 30S ribosomal subunit. Associates with free 30S ribosomal subunits (but not with 30S subunits that are part of 70S ribosomes or polysomes). Required for efficient processing of 16S rRNA. May interact with the 5'-terminal helix region of 16S rRNA. The chain is Ribosome-binding factor A from Bartonella tribocorum (strain CIP 105476 / IBS 506).